Consider the following 159-residue polypeptide: Probable cyclic pyranopterin monophosphate synthase (159 aa).

Substrate contacts are provided by residues 75-77 and 111-112; these read LCH and ME. The active site involves Asp-126.

The protein belongs to the MoaC family. Homohexamer; trimer of dimers.

The enzyme catalyses (8S)-3',8-cyclo-7,8-dihydroguanosine 5'-triphosphate = cyclic pyranopterin phosphate + diphosphate. Its pathway is cofactor biosynthesis; molybdopterin biosynthesis. Functionally, catalyzes the conversion of (8S)-3',8-cyclo-7,8-dihydroguanosine 5'-triphosphate to cyclic pyranopterin monophosphate (cPMP). The protein is Probable cyclic pyranopterin monophosphate synthase of Pyrococcus horikoshii (strain ATCC 700860 / DSM 12428 / JCM 9974 / NBRC 100139 / OT-3).